A 141-amino-acid chain; its full sequence is Hemoglobin subunit alpha (141 aa).

The 141-residue stretch at 1-141 (VLSPADKTNV…VSTVLTSKYR (141 aa)) folds into the Globin domain. Residue Ser3 is modified to Phosphoserine. Lys7 bears the N6-succinyllysine mark. A Phosphothreonine modification is found at Thr8. Lys11 is modified (N6-succinyllysine). N6-acetyllysine; alternate is present on Lys16. Position 16 is an N6-succinyllysine; alternate (Lys16). Tyr24 bears the Phosphotyrosine mark. A Phosphoserine modification is found at Ser35. At Lys40 the chain carries N6-succinyllysine. Residue His58 coordinates O2. His87 provides a ligand contact to heme b. Ser102 carries the post-translational modification Phosphoserine. Thr108 bears the Phosphothreonine mark. Residues Ser124 and Ser131 each carry the phosphoserine modification. Residues Thr134 and Thr137 each carry the phosphothreonine modification. At Ser138 the chain carries Phosphoserine.

This sequence belongs to the globin family. In terms of assembly, heterotetramer of two alpha chains and two beta chains. As to expression, red blood cells.

Its function is as follows. Involved in oxygen transport from the lung to the various peripheral tissues. In terms of biological role, hemopressin acts as an antagonist peptide of the cannabinoid receptor CNR1. Hemopressin-binding efficiently blocks cannabinoid receptor CNR1 and subsequent signaling. The polypeptide is Hemoglobin subunit alpha (HBA) (Cynopterus sphinx (Indian short-nosed fruit bat)).